We begin with the raw amino-acid sequence, 321 residues long: MKPSVVLYKSLPEDLRARLDEHCHVTEINGLTAENIAKHEDVFRQAEGILGSGGKVDAEFLRQAPKLRVASSISVGYDNFDVAALNDRGVLLMHTPTVLTETVADTMMALVLSSARRVVEMAERVKSGEWRGSISSDWFGIDVHHKKLGILGMGRIGLALAQRAHLGFGMPILYNARKHHDEAEQRFDAEYCDLDTLLAESDFLCISLPLTEQTHHLIGREQLAKMKRSAILINAGRGPVVDEQALIAALKDGTLHAAGLDVFEQEPLPVSSELLALRNVVALPHIGSATHETRYGMAKDAVDNLIAALNGKVEKNCVNPR.

Active-site residues include Arg-237 and Glu-266. The Proton donor role is filled by His-285.

This sequence belongs to the D-isomer specific 2-hydroxyacid dehydrogenase family. GhrB subfamily. As to quaternary structure, homodimer.

Its subcellular location is the cytoplasm. The catalysed reaction is glycolate + NADP(+) = glyoxylate + NADPH + H(+). It carries out the reaction (R)-glycerate + NAD(+) = 3-hydroxypyruvate + NADH + H(+). It catalyses the reaction (R)-glycerate + NADP(+) = 3-hydroxypyruvate + NADPH + H(+). Functionally, catalyzes the NADPH-dependent reduction of glyoxylate and hydroxypyruvate into glycolate and glycerate, respectively. This is Glyoxylate/hydroxypyruvate reductase B from Erwinia tasmaniensis (strain DSM 17950 / CFBP 7177 / CIP 109463 / NCPPB 4357 / Et1/99).